The primary structure comprises 236 residues: Segregation and condensation protein A (236 aa).

The protein belongs to the ScpA family. As to quaternary structure, component of a cohesin-like complex composed of ScpA, ScpB and the Smc homodimer, in which ScpA and ScpB bind to the head domain of Smc. The presence of the three proteins is required for the association of the complex with DNA.

It is found in the cytoplasm. In terms of biological role, participates in chromosomal partition during cell division. May act via the formation of a condensin-like complex containing Smc and ScpB that pull DNA away from mid-cell into both cell halves. The sequence is that of Segregation and condensation protein A from Streptococcus sanguinis (strain SK36).